The following is a 95-amino-acid chain: Microcin E492 immunity protein (95 aa).

The next 3 membrane-spanning stretches (helical) occupy residues 1–21 (MTLL…FCII), 35–55 (VIVL…TKVY), and 67–87 (YLFC…ILTI).

This sequence belongs to the MceB microcin immunity protein family.

It localises to the cell inner membrane. Protect the producing cell against microcin E492. This chain is Microcin E492 immunity protein, found in Klebsiella pneumoniae.